The sequence spans 1085 residues: SLIT-ROBO Rho GTPase-activating protein 1 (1085 aa).

Residues 19–314 form the F-BAR domain; sequence SQVKEIRAQL…AVDNLEPRSD (296 aa). Residues 351-390 are a coiled coil; sequence VQAELMLRYQQLQSRLATLKIENEEVKKTTEATLQTIQDM. Ser416 is subject to Phosphoserine. The disordered stretch occupies residues 475-496; the sequence is YMTTRPPNVPPKPQKHRKSRPR. A Rho-GAP domain is found at 506-694; sequence GDLETFVKDS…TIIIHHETIF (189 aa). Positions 743–802 constitute an SH3 domain; sequence CEPIEAIAKFDYVGRSARELSFKKGASLLLYHRASEDWWEGRHNGIDGLVPHQYIVVQDM. A compositionally biased stretch (polar residues) spans 808 to 822; sequence DTLSQKADSEASSGP. A disordered region spans residues 808-954; that stretch reads DTLSQKADSE…TGFNDHKPLD (147 aa). Residues Ser835 and Ser917 each carry the phosphoserine modification. Residues 922–931 are compositionally biased toward basic and acidic residues; it reads SRHDSLKKID. Ser932 bears the Phosphoserine mark. A compositionally biased stretch (polar residues) spans 937 to 946; sequence RSTSSGQYTG. Positions 956–985 form a coiled coil; that stretch reads ETIAQDIEETMNTALNELRELERQSTAKHA. Residues 997–1011 are compositionally biased toward polar residues; sequence KNSPTPATSTESLSP. Disordered stretches follow at residues 997–1038 and 1051–1085; these read KNSP…MSTF and KPPA…SCTM. Ser999 is subject to Phosphoserine. Thr1001 is modified (phosphothreonine). Residues 1027-1037 are compositionally biased toward low complexity; sequence STSSSSDTMST. Ser1032 carries the phosphoserine modification.

As to quaternary structure, homodimer. Forms a heterooligomer with SRGAP2 and SRGAP3 through its F-BAR domain. Interacts with ROBO1, CDC42 and RHOA. Interacts with FASLG. In terms of tissue distribution, expressed in brain, lung, kidney, and testis.

Functionally, GTPase-activating protein for RhoA and Cdc42 small GTPases. Together with CDC42 seems to be involved in the pathway mediating the repulsive signaling of Robo and Slit proteins in neuronal migration. SLIT2, probably through interaction with ROBO1, increases the interaction of SRGAP1 with ROBO1 and inactivates CDC42. The sequence is that of SLIT-ROBO Rho GTPase-activating protein 1 (SRGAP1) from Homo sapiens (Human).